We begin with the raw amino-acid sequence, 180 residues long: E1B protein, small T-antigen (180 aa).

The tract at residues 142–180 is disordered; it reads GPAAPLARQGSQQEEQQQRQEEEQVQEEMRSGLDPPTEN. Residues 157–172 are compositionally biased toward basic and acidic residues; sequence QQQRQEEEQVQEEMRS.

This sequence belongs to the adenoviridae E1B 19 kDa protein family.

This chain is E1B protein, small T-antigen, found in Simian adenovirus serotype 7 (SAdV-7).